Consider the following 144-residue polypeptide: Large ribosomal subunit protein uL16 (144 aa).

Belongs to the universal ribosomal protein uL16 family. As to quaternary structure, part of the 50S ribosomal subunit.

Functionally, binds 23S rRNA and is also seen to make contacts with the A and possibly P site tRNAs. The protein is Large ribosomal subunit protein uL16 of Lactiplantibacillus plantarum (strain ATCC BAA-793 / NCIMB 8826 / WCFS1) (Lactobacillus plantarum).